The following is an 839-amino-acid chain: Transcription regulator protein BACH2 (839 aa).

The region spanning 37–103 (CDVTLIVERK…AYTAKLLLSR (67 aa)) is the BTB domain. 2 disordered regions span residues 150–170 (QRPQ…EETM) and 247–331 (HGTS…LDRS). Residues 161 to 170 (GEEEEEEETM) show a composition bias toward acidic residues. Positions 247–263 (HGTSGFASTFSEDSPGN) are enriched in polar residues. Over residues 297–312 (TDIKDRPGDVEMDRKQ) the composition is skewed to basic and acidic residues. Ser-314 carries the phosphoserine modification. Positions 321 to 331 (TPTGAACLDRS) are enriched in low complexity. Glycyl lysine isopeptide (Lys-Gly) (interchain with G-Cter in SUMO2) cross-links involve residues Lys-381 and Lys-420. Ser-520 carries the phosphoserine modification. The segment at 582-609 (QSYGTNSSDESGSFSEADSESCPVQDRG) is disordered. Over residues 583–597 (SYGTNSSDESGSFSE) the composition is skewed to polar residues. The 64-residue stretch at 645–708 (FIHDIRRRSK…GELLDNFSCL (64 aa)) folds into the bZIP domain. Residues 650 to 666 (RRRSKNRIAAQRCRKRK) form a basic motif region. The segment at 670 to 677 (IQNLECEI) is leucine-zipper. The interval 778 to 813 (PWVPSNTSENCTSGRRLEGSDPGTFSERGPPLEARS) is disordered. Over residues 781 to 790 (PSNTSENCTS) the composition is skewed to polar residues. Residues 819–839 (DFCQEMTEKCTTDEQPRKDYA) carry the Nuclear export signal motif.

It belongs to the bZIP family. CNC subfamily. Homodimer; disulfide-linked. Heterodimer of BACH2 and Maf-related transcription factors. In terms of processing, the reversible disulfide bond may provide a mechanism to regulate the activity in oxidative stress responses. Phosphorylation at Ser-520 downstream of the PI-3K pathway promotes nuclear export. In terms of tissue distribution, detected in brain and spleen.

The protein localises to the cytoplasm. It localises to the nucleus. Its function is as follows. Transcriptional regulator that acts as a repressor or activator. Binds to Maf recognition elements (MARE). Plays an important role in coordinating transcription activation and repression by MAFK. Induces apoptosis in response to oxidative stress through repression of the antiapoptotic factor HMOX1. Positively regulates the nuclear import of actin. Is a key regulator of adaptive immunity, crucial for the maintenance of regulatory T-cell function and B-cell maturation. The chain is Transcription regulator protein BACH2 (Bach2) from Mus musculus (Mouse).